The primary structure comprises 139 residues: Small ribosomal subunit protein uS12 (139 aa).

Residues 118-139 (AGVANRNQSRSRYGTKKPKPKS) form a disordered region. Residues 130 to 139 (YGTKKPKPKS) show a composition bias toward basic residues.

Belongs to the universal ribosomal protein uS12 family. As to quaternary structure, part of the 30S ribosomal subunit. Contacts proteins S8 and S17. May interact with IF1 in the 30S initiation complex.

Functionally, with S4 and S5 plays an important role in translational accuracy. Its function is as follows. Interacts with and stabilizes bases of the 16S rRNA that are involved in tRNA selection in the A site and with the mRNA backbone. Located at the interface of the 30S and 50S subunits, it traverses the body of the 30S subunit contacting proteins on the other side and probably holding the rRNA structure together. The combined cluster of proteins S8, S12 and S17 appears to hold together the shoulder and platform of the 30S subunit. This chain is Small ribosomal subunit protein uS12, found in Mycoplasma mobile (strain ATCC 43663 / 163K / NCTC 11711) (Mesomycoplasma mobile).